The sequence spans 252 residues: MVKIGKVEMYINEELESGKKLHFVLIDPDDTHPEMAGRIAELCENVGVNAIMVGGSTGAEGEMLDNVVKAIKESSSLPVILFPGSHSGISKYADAIFFMSLLNSRNPFFITGAQALGAFTVKRYGLEPIPMAYIIVEPGETVGWVGDAKPIPRHKPKLAAAYALAGQYLGMRLVYLEAGSGSPEPVPPEMVRIVKSVIDVPLIVGGGIRTGDQVRELTKAGADIIVTGTAIESTKSIDEAKRKLEEIRRGLK.

Residues D27 and S56 each contribute to the Mg(2+) site. Residues 175 to 181 (YLEAGSG), 206 to 207 (GG), and 228 to 229 (GT) contribute to the sn-glycerol 1-phosphate site.

It belongs to the GGGP/HepGP synthase family. Group II subfamily. Mg(2+) serves as cofactor.

The protein localises to the cytoplasm. The enzyme catalyses sn-glycerol 1-phosphate + (2E,6E,10E)-geranylgeranyl diphosphate = sn-3-O-(geranylgeranyl)glycerol 1-phosphate + diphosphate. The protein operates within membrane lipid metabolism; glycerophospholipid metabolism. Functionally, prenyltransferase that catalyzes the transfer of the geranylgeranyl moiety of geranylgeranyl diphosphate (GGPP) to the C3 hydroxyl of sn-glycerol-1-phosphate (G1P). This reaction is the first ether-bond-formation step in the biosynthesis of archaeal membrane lipids. The polypeptide is Geranylgeranylglyceryl phosphate synthase (Pyrococcus abyssi (strain GE5 / Orsay)).